The following is a 306-amino-acid chain: D-alanine--D-alanine ligase B (306 aa).

Active-site residues include Glu-15 and Ser-150. In terms of domain architecture, ATP-grasp spans 101 to 303; sequence KLLWQGAGLP…FSQLVVRILE (203 aa). Residue 134 to 189 participates in ATP binding; sequence ISALGLPVIVKPSREGSSVGMSKVVAENALQDALRLAFQHDEEVLIEKWLSGPEFT. Mg(2+)-binding residues include Asp-257, Glu-270, and Asn-272. Ser-281 is an active-site residue.

The protein belongs to the D-alanine--D-alanine ligase family. Monomer. The cofactor is Mg(2+). Mn(2+) is required as a cofactor.

Its subcellular location is the cytoplasm. It carries out the reaction 2 D-alanine + ATP = D-alanyl-D-alanine + ADP + phosphate + H(+). It participates in cell wall biogenesis; peptidoglycan biosynthesis. In terms of biological role, cell wall formation. This Escherichia coli (strain K12) protein is D-alanine--D-alanine ligase B (ddlB).